Reading from the N-terminus, the 90-residue chain is Sec-independent protein translocase protein TatA (90 aa).

Residues 1–21 (MGSMSIWHWVIVAVIVMLLFG) traverse the membrane as a helical segment. The disordered stretch occupies residues 44-90 (AEDETPPAVQAAPPPAEPVRTIPHATETSPGTAIPASHLPGGERKPV).

Belongs to the TatA/E family. As to quaternary structure, the Tat system comprises two distinct complexes: a TatABC complex, containing multiple copies of TatA, TatB and TatC subunits, and a separate TatA complex, containing only TatA subunits. Substrates initially bind to the TatABC complex, which probably triggers association of the separate TatA complex to form the active translocon.

The protein resides in the cell inner membrane. Functionally, part of the twin-arginine translocation (Tat) system that transports large folded proteins containing a characteristic twin-arginine motif in their signal peptide across membranes. TatA could form the protein-conducting channel of the Tat system. The polypeptide is Sec-independent protein translocase protein TatA (Methylobacterium radiotolerans (strain ATCC 27329 / DSM 1819 / JCM 2831 / NBRC 15690 / NCIMB 10815 / 0-1)).